A 122-amino-acid chain; its full sequence is Large ribosomal subunit protein uL18 (122 aa).

Belongs to the universal ribosomal protein uL18 family. Part of the 50S ribosomal subunit; part of the 5S rRNA/L5/L18/L25 subcomplex. Contacts the 5S and 23S rRNAs.

In terms of biological role, this is one of the proteins that bind and probably mediate the attachment of the 5S RNA into the large ribosomal subunit, where it forms part of the central protuberance. This is Large ribosomal subunit protein uL18 from Dictyoglomus turgidum (strain DSM 6724 / Z-1310).